The sequence spans 567 residues: Ribulokinase (567 aa).

The protein belongs to the ribulokinase family.

The catalysed reaction is D-ribulose + ATP = D-ribulose 5-phosphate + ADP + H(+). The enzyme catalyses L-ribulose + ATP = L-ribulose 5-phosphate + ADP + H(+). Its pathway is carbohydrate degradation; L-arabinose degradation via L-ribulose; D-xylulose 5-phosphate from L-arabinose (bacterial route): step 2/3. This is Ribulokinase from Vibrio parahaemolyticus serotype O3:K6 (strain RIMD 2210633).